The following is a 67-amino-acid chain: DNA-directed RNA polymerase subunit omega (67 aa).

Belongs to the RNA polymerase subunit omega family. In terms of assembly, the RNAP catalytic core consists of 2 alpha, 1 beta, 1 beta' and 1 omega subunit. When a sigma factor is associated with the core the holoenzyme is formed, which can initiate transcription.

The catalysed reaction is RNA(n) + a ribonucleoside 5'-triphosphate = RNA(n+1) + diphosphate. Its function is as follows. Promotes RNA polymerase assembly. Latches the N- and C-terminal regions of the beta' subunit thereby facilitating its interaction with the beta and alpha subunits. The chain is DNA-directed RNA polymerase subunit omega from Nautilia profundicola (strain ATCC BAA-1463 / DSM 18972 / AmH).